The sequence spans 337 residues: MTHQVAVLHQDKKFDVSLRPKGLEEFYGQHHLKERLDLFLCAALQRGEVPGHCLFFGPPGLGKTSLAHIVAYTVGKGLVLASGPQLIKPSDLLGLLTSLQEGDVFFIDEIHRMGKVAEEYLYSAMEDFKVDITIDSGPGARSVRVDLAPFTLVGATTRSGMLSEPLRTRFAFSARLSYYSDQDLKEILVRSSHLLGIEADSSALLEIAKRSRGTPRLANHLLRWVRDFAQIREGNCINGDVAEKALAMLLIDDWGLNEIDIKLLTTIIDYYQGGPVGIKTLSVAVGEDIKTLEDVYEPFLILKGFIKKTPRGRMVTQLAYDHLKRHAKNLLSLGEGQ.

Residues 1-179 (MTHQVAVLHQ…FAFSARLSYY (179 aa)) form a large ATPase domain (RuvB-L) region. Residues L18, R19, G60, K63, T64, S65, 126-128 (EDF), R169, Y179, and R216 each bind ATP. Mg(2+) is bound at residue T64. The interval 180–250 (SDQDLKEILV…VAEKALAMLL (71 aa)) is small ATPAse domain (RuvB-S). Residues 253–337 (DWGLNEIDIK…KNLLSLGEGQ (85 aa)) form a head domain (RuvB-H) region. The DNA site is built by K308 and R313.

Belongs to the RuvB family. As to quaternary structure, homohexamer. Forms an RuvA(8)-RuvB(12)-Holliday junction (HJ) complex. HJ DNA is sandwiched between 2 RuvA tetramers; dsDNA enters through RuvA and exits via RuvB. An RuvB hexamer assembles on each DNA strand where it exits the tetramer. Each RuvB hexamer is contacted by two RuvA subunits (via domain III) on 2 adjacent RuvB subunits; this complex drives branch migration. In the full resolvosome a probable DNA-RuvA(4)-RuvB(12)-RuvC(2) complex forms which resolves the HJ.

The protein resides in the cytoplasm. It catalyses the reaction ATP + H2O = ADP + phosphate + H(+). Functionally, the RuvA-RuvB-RuvC complex processes Holliday junction (HJ) DNA during genetic recombination and DNA repair, while the RuvA-RuvB complex plays an important role in the rescue of blocked DNA replication forks via replication fork reversal (RFR). RuvA specifically binds to HJ cruciform DNA, conferring on it an open structure. The RuvB hexamer acts as an ATP-dependent pump, pulling dsDNA into and through the RuvAB complex. RuvB forms 2 homohexamers on either side of HJ DNA bound by 1 or 2 RuvA tetramers; 4 subunits per hexamer contact DNA at a time. Coordinated motions by a converter formed by DNA-disengaged RuvB subunits stimulates ATP hydrolysis and nucleotide exchange. Immobilization of the converter enables RuvB to convert the ATP-contained energy into a lever motion, pulling 2 nucleotides of DNA out of the RuvA tetramer per ATP hydrolyzed, thus driving DNA branch migration. The RuvB motors rotate together with the DNA substrate, which together with the progressing nucleotide cycle form the mechanistic basis for DNA recombination by continuous HJ branch migration. Branch migration allows RuvC to scan DNA until it finds its consensus sequence, where it cleaves and resolves cruciform DNA. The protein is Holliday junction branch migration complex subunit RuvB of Chlamydia pneumoniae (Chlamydophila pneumoniae).